Consider the following 89-residue polypeptide: Otospiralin (89 aa).

Residues 1–21 (MQPCVLWWLALGLLLGIPAGA) form the signal peptide.

This sequence belongs to the otospiralin family. As to expression, ear specific. Expressed in the cochlea and vestibule, but not in the cochlear nerve, cochlear nucleus, spinal chord, muscle, cerebral cortex, cerebellum, diencephalon and olfactory bulb. In the cochlea, expressed in fibrocytes of the spiral limbus, spiral ligament and suprastrial zone. In the vestibule, expressed in cells located to the stroma below the macular and crista sensory epithelia and in the subepithelial layer of the walls of semicircular canals and maculae.

The protein localises to the secreted. May be essential for the survival of the neurosensory epithelium of the inner ear. This chain is Otospiralin (Otos), found in Rattus norvegicus (Rat).